Here is a 484-residue protein sequence, read N- to C-terminus: Catalase (484 aa).

Met-53 is modified (methionine sulfone). Catalysis depends on residues His-54 and Asn-127. Tyr-337 is a binding site for heme.

In terms of assembly, homotetramer. The cofactor is heme. Requires NADP(+) as cofactor.

The protein resides in the cytoplasm. It carries out the reaction 2 H2O2 = O2 + 2 H2O. Functionally, decomposes hydrogen peroxide into water and oxygen; serves to protect cells from the toxic effects of hydrogen peroxide. This is Catalase (katA) from Proteus mirabilis.